The sequence spans 301 residues: Lufaxin (301 aa).

Residues 1–23 (MNSINFLSIVGLISFGFIVAVKC) form the signal peptide. 4 disulfides stabilise this stretch: cysteine 52/cysteine 60, cysteine 78/cysteine 137, cysteine 102/cysteine 112, and cysteine 258/cysteine 265. N-linked (GlcNAc...) asparagine glycosylation occurs at asparagine 262.

In terms of assembly, interacts with factor Xa. Associates with complement proconvertase C3b-B complex. Expressed in salivary glands.

It is found in the secreted. Functionally, sand fly salivary protein with antithrombotic, and anti-complement (alternative pathway) activities. Is a slow, tight, non-competitive, and reversible inhibitor of factor Xa (FXa, F10). Is specific for FXa (Kd=3.86 nM) and does not interact with non-activated FX, or all other enzymes tested. In addition, it blocks prothrombinase and increases both prothrombin time and activated partial thromboplastin time. It also prevents protease-activated receptor 2 (F2RL1, PAR2) activation by FXa. In vivo, it abrogates edema formation triggered by injection of FXa in the paw of mice. Moreover, it prevents FeCl(3)-induced carotid artery thrombus formation and prolongs activated partial thromboplastin time ex vivo, implying that it works as an anticoagulant in vivo. It also inhibits the early steps of the alternative pathway of complement by direct binding to the proconvertase C3b-B complex, by inhibiting activation of factor B and consequently the formation of the C3 convertase. This is Lufaxin from Lutzomyia longipalpis (Sand fly).